The chain runs to 581 residues: Activating signal cointegrator 1 (581 aa).

The residue at position 2 (Ala2) is an N-acetylalanine. A disordered region spans residues 97-118 (KSGDHLKRGRKKGRNRQEVPAF). A C4-type zinc finger spans residues 171–187 (CDCLGQKHKLINNCLIC). Residues 200-300 (CLFCGTLVCT…ASDSNQWLSK (101 aa)) are mediates interaction with DDRGK1. At Ser276 the chain carries Phosphoserine. Tyr289 is subject to Phosphotyrosine. The segment at 300 to 400 (KLERETLQKR…WVDHTGAASQ (101 aa)) is mediates interaction with UFL1. Residues Lys324, Lys325, and Lys334 each participate in a glycyl lysine isopeptide (Lys-Gly) (interchain with G-Cter in UFM1) cross-link. Ser341 is modified (phosphoserine). Lys367 participates in a covalent cross-link: Glycyl lysine isopeptide (Lys-Gly) (interchain with G-Cter in UFM1). The ASCH domain occupies 437 to 531 (LSVHQPWASL…FKEQFPDISQ (95 aa)).

As to quaternary structure, interacts with the thyroid hormone receptor/TR (via the ligand-binding domain); this interaction requires the presence of thyroid hormone. Interacts with the androgen receptor/AR; in an androgen, testosterone and dihydrotestosterone-dependent manner. Interacts with ESR1 (estrogen ligand-bound); competes with UFSP2. Interacts with UFSP2; competes with ligand-bound ESR1. Interacts with DDRGK1 and UFL1; the interaction with DDRGK1 is direct. Interacts with NCOA1. Interacts with EP300. Part of the ASC-1 complex, that contains TRIP4, ASCC1, ASCC2 and ASCC3. Identified in the RQT (ribosome quality control trigger) complex, that contains ASCC2, ASCC3 and TRIP4. Interacts with NEK6. Interacts with CSRP1. Interacts with ZCCHC4. Phosphorylated by NEK6. In terms of processing, polyufmylated by the UFM1-conjugating system composed of the enzymes UBA5, UFC1 and UFL1. Deufmylated by the protease UFSP2. Ufmylation of TRIP4 is promoted by ligand-bound nuclear receptors that compete with UFSP2 for interaction with TRIP4. Nuclear receptors-induced ufmylation promotes the recruitment of additional transcriptional coactivators like EP300 and NCOA1 and therefore the assembly of a coactivator complex facilitating nuclear receptor-mediated transcription.

The protein resides in the nucleus. The protein localises to the cytoplasm. It localises to the cytosol. It is found in the cytoskeleton. Its subcellular location is the microtubule organizing center. The protein resides in the centrosome. In terms of biological role, transcription coactivator which associates with nuclear receptors, transcriptional coactivators including EP300, CREBBP and NCOA1, and basal transcription factors like TBP and TFIIA to facilitate nuclear receptors-mediated transcription. May thereby play an important role in establishing distinct coactivator complexes under different cellular conditions. Plays a role in thyroid hormone receptor and estrogen receptor transactivation. Also involved in androgen receptor transactivation. Plays a pivotal role in the transactivation of NF-kappa-B, SRF and AP1. Acts as a mediator of transrepression between nuclear receptor and either AP1 or NF-kappa-B. May play a role in the development of neuromuscular junction. May play a role in late myogenic differentiation. Also functions as part of the RQC trigger (RQT) complex that activates the ribosome quality control (RQC) pathway, a pathway that degrades nascent peptide chains during problematic translation. The protein is Activating signal cointegrator 1 of Homo sapiens (Human).